The sequence spans 374 residues: o-succinylbenzoate synthase (374 aa).

The active-site Proton donor is the K164. Mg(2+) contacts are provided by D189, E214, and D239. K263 serves as the catalytic Proton acceptor.

The protein belongs to the mandelate racemase/muconate lactonizing enzyme family. MenC type 2 subfamily. As to quaternary structure, homodimer. Requires a divalent metal cation as cofactor.

It catalyses the reaction (1R,6R)-6-hydroxy-2-succinyl-cyclohexa-2,4-diene-1-carboxylate = 2-succinylbenzoate + H2O. It participates in quinol/quinone metabolism; 1,4-dihydroxy-2-naphthoate biosynthesis; 1,4-dihydroxy-2-naphthoate from chorismate: step 4/7. Its pathway is quinol/quinone metabolism; menaquinone biosynthesis. Its function is as follows. Converts 2-succinyl-6-hydroxy-2,4-cyclohexadiene-1-carboxylate (SHCHC) to 2-succinylbenzoate (OSB). Also acts as a N-succinylamino acid racemase (NSAR) that catalyzes the racemization of N-succinyl-L-phenylglycine. L.innocua has the menaquinone synthesis pathway, indicating that the species requires OSBS activity. However, the NSAR/OSBS is not encoded in the menaquinone operon, raising the possibility that both NSAR and OSBS are biological functions. This is o-succinylbenzoate synthase from Listeria innocua serovar 6a (strain ATCC BAA-680 / CLIP 11262).